The chain runs to 772 residues: Uracil catabolism protein 2 (772 aa).

The segment at 1–70 is disordered; sequence MDINSNASVS…KKPRKKRKTF (70 aa). Basic and acidic residues predominate over residues 39 to 51; that stretch reads HPEDSARAKERSE. Positions 59–69 are enriched in basic residues; it reads GNKKPRKKRKT. Positions 72-101 form a DNA-binding region, zn(2)-C6 fungal-type; it reads CDTCRRVKTRCDFEPFIGKCYRCNVLQLDC.

It belongs to the URC2 family.

It localises to the cytoplasm. The protein resides in the nucleus. Probable transcriptional activator involved in uracil catabolism. The polypeptide is Uracil catabolism protein 2 (URC2) (Saccharomyces cerevisiae (strain ATCC 204508 / S288c) (Baker's yeast)).